A 285-amino-acid chain; its full sequence is Short chain dehydrogenase sol3 (285 aa).

Residues leucine 39, lysine 64, and aspartate 87 each contribute to the NADP(+) site. Active-site proton donor residues include serine 168 and tyrosine 200. Residues tyrosine 200, lysine 204, and serine 234 each contribute to the NADP(+) site. The active-site Lowers pKa of active site Tyr is the lysine 204.

It belongs to the short-chain dehydrogenases/reductases (SDR) family.

It functions in the pathway phytotoxin biosynthesis. Functionally, short chain dehydrogenase; part of the gene cluster that mediates the biosynthesis of the phytotoxin solanapyrone, a causal agent of early blight disease of potato and tomato. The prosolanapyrone synthase sol1 is a polyketide synthase that produces the octaketide desmethylprosolanapyrone I via sequential condensations of 7 malonyl-CoA units with one acetyl-CoA unit, and one methylation step. The octaketide backbone is further methylated by the sol2 O-methyltransferase to yield prosolanapyrone I. Prosolanapyrone I is hydroxylated to prosolanapyrone II by the cytochrome P450 monooxygenase sol6. The solanapyrone synthase sol5 then catalyzes the oxidation of prosolanapyrone II and the subsequent Diels Alder cycloisomerization of the product prosolanapyrone III to solanapyrones A and D. Solanapyrones A and D are then converted into solanapyrones B and E, respectively, by the sol3 dehydrogenase. The chain is Short chain dehydrogenase sol3 (sol3) from Alternaria solani.